The chain runs to 550 residues: Arginine--tRNA ligase (550 aa).

A 'HIGH' region motif is present at residues 130–140 (ANPTGPIHIGG).

Belongs to the class-I aminoacyl-tRNA synthetase family. As to quaternary structure, monomer.

Its subcellular location is the cytoplasm. The enzyme catalyses tRNA(Arg) + L-arginine + ATP = L-arginyl-tRNA(Arg) + AMP + diphosphate. This chain is Arginine--tRNA ligase, found in Mycolicibacterium paratuberculosis (strain ATCC BAA-968 / K-10) (Mycobacterium paratuberculosis).